The chain runs to 60 residues: Large ribosomal subunit protein uL30 (60 aa).

Belongs to the universal ribosomal protein uL30 family. Part of the 50S ribosomal subunit.

This chain is Large ribosomal subunit protein uL30, found in Cupriavidus necator (strain ATCC 17699 / DSM 428 / KCTC 22496 / NCIMB 10442 / H16 / Stanier 337) (Ralstonia eutropha).